The following is a 117-amino-acid chain: Large ribosomal subunit protein bL20 (117 aa).

Belongs to the bacterial ribosomal protein bL20 family.

Its function is as follows. Binds directly to 23S ribosomal RNA and is necessary for the in vitro assembly process of the 50S ribosomal subunit. It is not involved in the protein synthesizing functions of that subunit. The polypeptide is Large ribosomal subunit protein bL20 (Campylobacter jejuni subsp. jejuni serotype O:2 (strain ATCC 700819 / NCTC 11168)).